We begin with the raw amino-acid sequence, 300 residues long: uncharacterized protein (300 aa).

Residues E146, E148, and D177 each contribute to the a divalent metal cation site.

Belongs to the FAH family.

This is an uncharacterized protein from Staphylococcus aureus (strain MW2).